Reading from the N-terminus, the 1997-residue chain is Chromatin-remodeling ATPase INO80 (1997 aa).

3 disordered regions span residues 1-378 (MDHF…AAPS), 397-579 (IAAP…AENE), and 674-858 (ERKK…EKVV). Positions 12 to 25 (PHFDEDGTEGRGDR) are enriched in basic and acidic residues. A compositionally biased stretch (pro residues) spans 32–41 (GPAPPPPPPR). Low complexity predominate over residues 49 to 64 (NPVSSNSAVQSQAAAA). A compositionally biased stretch (polar residues) spans 89–107 (STNSMRATPHSSSSFNLRS). Positions 108-117 (PTREPSEYRH) are enriched in basic and acidic residues. Low complexity-rich tracts occupy residues 118-156 (PLSSLATPAPFAASPPTSIANANNTNNNNALGAAGSLSS), 203-230 (SLQAPPAITPIAGLSAPAPASGSLPLSA), and 240-251 (SSSSQPPARASQ). Basic and acidic residues predominate over residues 264–276 (SFRDRDSSVREKS). Residues 288–297 (EASNGISGSS) are compositionally biased toward polar residues. A compositionally biased stretch (basic and acidic residues) spans 298-317 (PRKDRDRDRDHRGTTRESQR). Polar residues-rich tracts occupy residues 318–340 (RSVSGHSDTGSSWRNATQTSASN) and 366–378 (VDNTTSSSIAAPS). Residues 411–420 (SPRLSLRPPS) show a composition bias toward low complexity. 3 stretches are compositionally biased toward polar residues: residues 433-442 (NPTNGTTSTA), 451-465 (SPPSKMSPGTSTNPS), and 472-481 (SFSNILSSSE). Basic and acidic residues-rich tracts occupy residues 500–519 (VPMKVERADSSEKVVKEKKE) and 529–540 (RISDIRHSESTP). Residues 666–735 (ERELFAEKER…VQQTRLILQK (70 aa)) adopt a coiled-coil conformation. Residues 689 to 707 (MATTMEAKAAALARASAAQ) are compositionally biased toward low complexity. The segment covering 709–723 (EAERQKYMREAERAN) has biased composition (basic and acidic residues). Basic residues predominate over residues 769-781 (TKGKGRAGARPKK). Positions 782–793 (SKEQKQAEKDAA) are enriched in basic and acidic residues. The span at 794–806 (EAAQAALDAGLEL) shows a compositional bias: low complexity. Basic and acidic residues predominate over residues 824-858 (APKEADVDKDKENKEPQEPKEPKEPKEKVIKEKVV). The 126-residue stretch at 881–1006 (IWRDLARKDV…SHFIGKKIKT (126 aa)) folds into the DBINO domain. Positions 1130–1302 (VNLYEQGING…WALLHFIMPS (173 aa)) constitute a Helicase ATP-binding domain. Position 1143–1150 (1143–1150 (DEMGLGKT)) interacts with ATP. Positions 1253 to 1256 (DEAQ) match the DEAQ box motif. The Helicase C-terminal domain maps to 1702 to 1858 (KLDELLRELK…GSSAAGGGVD (157 aa)). Basic and acidic residues predominate over residues 1891-1902 (ELLESGELDKMQ). Positions 1891 to 1986 (ELLESGELDK…GSKKAKTTKQ (96 aa)) are disordered. Over residues 1903–1914 (KKSRGGNKRKRG) the composition is skewed to basic residues. Basic and acidic residues predominate over residues 1919–1933 (EGKEVSLDEMYHEGE). Gly residues predominate over residues 1954–1967 (AAGGEGGDGKGAVG). Over residues 1970 to 1985 (AKKRKTGGSKKAKTTK) the composition is skewed to basic residues.

The protein belongs to the SNF2/RAD54 helicase family. In terms of assembly, component of the INO80 chromatin-remodeling complex.

It localises to the nucleus. It catalyses the reaction ATP + H2O = ADP + phosphate + H(+). In terms of biological role, ATPase component of the INO80 complex which remodels chromatin by shifting nucleosomes and is involved in DNA repair. This chain is Chromatin-remodeling ATPase INO80 (crf2-1), found in Neurospora crassa (strain ATCC 24698 / 74-OR23-1A / CBS 708.71 / DSM 1257 / FGSC 987).